A 433-amino-acid chain; its full sequence is Tol-Pal system protein TolB (433 aa).

The N-terminal stretch at 1 to 26 (MSLMTKLGFRALVASCLIAAGGAAHA) is a signal peptide.

It belongs to the TolB family. As to quaternary structure, the Tol-Pal system is composed of five core proteins: the inner membrane proteins TolA, TolQ and TolR, the periplasmic protein TolB and the outer membrane protein Pal. They form a network linking the inner and outer membranes and the peptidoglycan layer.

It is found in the periplasm. Its function is as follows. Part of the Tol-Pal system, which plays a role in outer membrane invagination during cell division and is important for maintaining outer membrane integrity. The sequence is that of Tol-Pal system protein TolB from Burkholderia thailandensis (strain ATCC 700388 / DSM 13276 / CCUG 48851 / CIP 106301 / E264).